The chain runs to 30 residues: Cyclotide hyen-D (30 aa).

A cross-link (cyclopeptide (Gly-Asn)) is located at residues 1 to 30 (GFPCGESCVYIPCFTAAIGCSCKSKVCYKN). 3 disulfides stabilise this stretch: Cys-4-Cys-20, Cys-8-Cys-22, and Cys-13-Cys-27.

Post-translationally, this is a cyclic peptide. Detected in stems (at protein level).

Probably participates in a plant defense mechanism. Has strong cytotoxic activity against HUVEC cells (LC(50)= 0.58 uM) and various cancer cells including HeLa (LC(50)= 0.48 uM), MCF-7 and K562. Also displays some hemolytic activity. Binds to and induces leakage in phospholipd membranes, particularly ones containing 1-palmitoyl-2-oleophosphatidylethanolamine (POPE). This chain is Cyclotide hyen-D, found in Pigea enneasperma (Spade flower).